A 332-amino-acid polypeptide reads, in one-letter code: 2,3-diketo-L-gulonate reductase (332 aa).

His44 acts as the Proton donor in catalysis. NAD(+) contacts are provided by residues 168-174, 224-225, and 304-306; these read ITMVDMS, WK, and GHE.

It belongs to the LDH2/MDH2 oxidoreductase family. DlgD subfamily. Homodimer.

Its subcellular location is the cytoplasm. The enzyme catalyses 3-dehydro-L-gulonate + NAD(+) = 2,3-dioxo-L-gulonate + NADH + H(+). It catalyses the reaction 3-dehydro-L-gulonate + NADP(+) = 2,3-dioxo-L-gulonate + NADPH + H(+). In terms of biological role, catalyzes the reduction of 2,3-diketo-L-gulonate in the presence of NADH, to form 3-keto-L-gulonate. The chain is 2,3-diketo-L-gulonate reductase from Shigella boydii serotype 4 (strain Sb227).